Here is a 124-residue protein sequence, read N- to C-terminus: Small ribosomal subunit protein bS6m (124 aa).

The protein belongs to the bacterial ribosomal protein bS6 family. In terms of assembly, component of the mitochondrial ribosome small subunit (28S) which comprises a 12S rRNA and about 30 distinct proteins.

It localises to the mitochondrion. The protein is Small ribosomal subunit protein bS6m (MRPS6) of Bos taurus (Bovine).